Here is a 278-residue protein sequence, read N- to C-terminus: Probable 3-hydroxybutyryl-CoA dehydrogenase (278 aa).

This sequence belongs to the 3-hydroxyacyl-CoA dehydrogenase family.

The enzyme catalyses (3S)-3-hydroxybutanoyl-CoA + NADP(+) = acetoacetyl-CoA + NADPH + H(+). It participates in lipid metabolism; butanoate metabolism. In Deinococcus radiodurans (strain ATCC 13939 / DSM 20539 / JCM 16871 / CCUG 27074 / LMG 4051 / NBRC 15346 / NCIMB 9279 / VKM B-1422 / R1), this protein is Probable 3-hydroxybutyryl-CoA dehydrogenase (hbd).